A 157-amino-acid polypeptide reads, in one-letter code: Peptide methionine sulfoxide reductase MsrA (157 aa).

C10 is an active-site residue.

It belongs to the MsrA Met sulfoxide reductase family.

The catalysed reaction is L-methionyl-[protein] + [thioredoxin]-disulfide + H2O = L-methionyl-(S)-S-oxide-[protein] + [thioredoxin]-dithiol. The enzyme catalyses [thioredoxin]-disulfide + L-methionine + H2O = L-methionine (S)-S-oxide + [thioredoxin]-dithiol. Has an important function as a repair enzyme for proteins that have been inactivated by oxidation. Catalyzes the reversible oxidation-reduction of methionine sulfoxide in proteins to methionine. The polypeptide is Peptide methionine sulfoxide reductase MsrA (Clostridium botulinum (strain Okra / Type B1)).